We begin with the raw amino-acid sequence, 175 residues long: uncharacterized protein (175 aa).

This is an uncharacterized protein from Treponema pallidum (strain Nichols).